The primary structure comprises 207 residues: Guanylate kinase (207 aa).

The Guanylate kinase-like domain occupies 4–184; the sequence is GTLYIVSAPS…ALMDFKAILR (181 aa). 11–18 is an ATP binding site; sequence APSGAGKS.

The protein belongs to the guanylate kinase family.

The protein localises to the cytoplasm. The enzyme catalyses GMP + ATP = GDP + ADP. Its function is as follows. Essential for recycling GMP and indirectly, cGMP. The chain is Guanylate kinase from Vibrio parahaemolyticus serotype O3:K6 (strain RIMD 2210633).